A 226-amino-acid polypeptide reads, in one-letter code: Endonuclease NucS (226 aa).

This sequence belongs to the NucS endonuclease family.

Its subcellular location is the cytoplasm. Functionally, cleaves both 3' and 5' ssDNA extremities of branched DNA structures. In Mycobacterium tuberculosis (strain ATCC 25618 / H37Rv), this protein is Endonuclease NucS.